We begin with the raw amino-acid sequence, 409 residues long: MGKLHSKHACKRRENPEGDSFVVNGFIAKRAAEEGERYGNNLKDYKNEELKDSQPTLLHCPLQVVLPPEKAEGCESFLQYLSPDDEERDAQKVTKRISLQDLECNVSLAEDNRQEWVFTLYDFDNSGKVTKEDMSSLMHTIYDVVDASVKHSCNSKRRSLRVKLSVTPEPAARRRDATHTERETSHLSQVEPVRSEEHRSADRRQSTHIRGQTEAHEGNHYCVDENTERRNHYLDLAGIENYTSRFDSSSPDADQDPPSRSSHSQSRPHSQEPETHVYQRRSQLMEPCVAPDPRLRTGPQLIRSRSPKGSSRYPGVIPNVTKTSKCHGHHQPISAGQDVYHLTQQSHTHAHTPSGLQHSHSRRIRSRAREQQALTPVKNTNATALVQRHEHHHHHEHHHHHHYHHYHQT.

The N-myristoyl glycine moiety is linked to residue glycine 2. Residues 109–144 (AEDNRQEWVFTLYDFDNSGKVTKEDMSSLMHTIYDV) form the EF-hand domain. Aspartate 122, aspartate 124, serine 126, lysine 128, and aspartate 133 together coordinate Ca(2+). 4 disordered regions span residues 160–224 (LRVK…YCVD), 243–315 (TSRF…RYPG), 346–366 (SHTH…RIRS), and 388–409 (RHEH…YHQT). Composition is skewed to basic and acidic residues over residues 171–185 (AARR…RETS) and 193–224 (VRSE…YCVD). The segment covering 247 to 268 (DSSSPDADQDPPSRSSHSQSRP) has biased composition (low complexity). The span at 389-409 (HEHHHHHEHHHHHHYHHYHQT) shows a compositional bias: basic residues.

Belongs to the NKD family. In terms of tissue distribution, expressed ubiquitously until 1 dpf, when expression becomes confined to the anterior CNS, with slight expression in the developing tail.

It localises to the cell membrane. The protein localises to the cytoplasm. Cell autonomous antagonist of both the canonical and non-canonical Wnt signaling pathways. The sequence is that of Protein naked cuticle homolog 2 (nkd2) from Danio rerio (Zebrafish).